A 201-amino-acid polypeptide reads, in one-letter code: MELMFQDTNEIYNISESIFNKVFNEPLVHQIIVCYLARRRQGSKAQKSRSEVSGSGKKPWRQKGTGRARSGSLRSPIWRSGGVTFAAKPKKYKLKMNKKMYRYAIKSILSELIRQNRFFLFKEFIIEFPKTKILLKKLELINLKSVLIITAHKNTSLLYASRNLYHVCVINVKSINPVILISYEKVLITLSAIKKIEVMFK.

The tract at residues 45–75 (AQKSRSEVSGSGKKPWRQKGTGRARSGSLRS) is disordered.

This sequence belongs to the universal ribosomal protein uL4 family. As to quaternary structure, part of the 50S ribosomal subunit.

Functionally, one of the primary rRNA binding proteins, this protein initially binds near the 5'-end of the 23S rRNA. It is important during the early stages of 50S assembly. It makes multiple contacts with different domains of the 23S rRNA in the assembled 50S subunit and ribosome. In terms of biological role, forms part of the polypeptide exit tunnel. This Buchnera aphidicola subsp. Cinara cedri (strain Cc) protein is Large ribosomal subunit protein uL4.